Here is a 228-residue protein sequence, read N- to C-terminus: E3 ubiquitin-protein ligase RNF114 (228 aa).

An RING-type zinc finger spans residues Cys29–Arg68. Zn(2+) is bound by residues Cys91 and Cys94. The C2HC RNF-type zinc-finger motif lies at Cys91–Cys110. Lys102 carries the post-translational modification N6-acetyllysine. Residues His106 and Cys110 each contribute to the Zn(2+) site. An N6-acetyllysine modification is found at Lys112.

Interacts with XAF1, the interaction increases XAF1 stability and proapoptotic effects, and may regulate IFN signaling. Autoubiquitinated. Polyubiquitinated in the presence of E2 enzymes UBE2D1, UBE2D2 and UBE2D3, but only monoubiquitinated in the presence of UBE2E1.

The protein resides in the cytoplasm. It is found in the nucleus. It catalyses the reaction S-ubiquitinyl-[E2 ubiquitin-conjugating enzyme]-L-cysteine + [acceptor protein]-L-lysine = [E2 ubiquitin-conjugating enzyme]-L-cysteine + N(6)-ubiquitinyl-[acceptor protein]-L-lysine.. Its pathway is protein modification; protein ubiquitination. In terms of biological role, E3 ubiquitin-protein ligase that promotes the ubiquitination of various substrates. In turn, participates in the regulation of many biological processes including cell cycle, apoptosis, osteoclastogenesis as well as innate or adaptive immunity. Acts as negative regulator of NF-kappa-B-dependent transcription by promoting the ubiquitination and stabilization of the NF-kappa-B inhibitor TNFAIP3. May promote the ubiquitination of TRAF6 as well. Also acts as a negative regulator of T-cell activation. Inhibits cellular dsRNA responses and interferon production by targeting MAVS component for proteasomal degradation. Ubiquitinates the CDK inhibitor CDKN1A leading to its degradationand probably also CDKN1B and CDKN1C. This activity stimulates cell cycle G1-to-S phase transition and suppresses cellular senescence. May play a role in spermatogenesis. The sequence is that of E3 ubiquitin-protein ligase RNF114 (RNF114) from Pan troglodytes (Chimpanzee).